Here is a 479-residue protein sequence, read N- to C-terminus: Mannose-1-phosphate guanylyltransferase RfbM (479 aa).

This sequence belongs to the mannose-6-phosphate isomerase type 2 family. Homodimer.

The enzyme catalyses alpha-D-mannose 1-phosphate + GTP + H(+) = GDP-alpha-D-mannose + diphosphate. It functions in the pathway nucleotide-sugar biosynthesis; GDP-alpha-D-mannose biosynthesis; GDP-alpha-D-mannose from alpha-D-mannose 1-phosphate (GTP route): step 1/1. It participates in bacterial outer membrane biogenesis; LPS O-antigen biosynthesis. Functionally, involved in GDP-mannose biosynthesis which serves as the activated sugar nucleotide precursor for mannose residues in cell surface polysaccharides. This enzyme participates in synthesis of the LPS group B O antigen. The chain is Mannose-1-phosphate guanylyltransferase RfbM (rfbM) from Salmonella typhimurium (strain LT2 / SGSC1412 / ATCC 700720).